The primary structure comprises 222 residues: Hexitol phosphatase B (222 aa).

Catalysis depends on Asp-13, which acts as the Nucleophile. A divalent metal cation-binding residues include Asp-13 and Asp-15. Substrate-binding positions include 13-15 (DMD), 115-116 (SA), and Lys-148. Asp-15 (proton donor) is an active-site residue. Asp-173 contributes to the a divalent metal cation binding site.

The protein belongs to the HAD-like hydrolase superfamily. CbbY/CbbZ/Gph/YieH family. Mg(2+) is required as a cofactor. The cofactor is Mn(2+). Co(2+) serves as cofactor. It depends on Zn(2+) as a cofactor.

The catalysed reaction is sugar phosphate + H2O = sugar + phosphate.. It carries out the reaction 2-deoxy-D-glucose 6-phosphate + H2O = 2-deoxy-D-glucose + phosphate. It catalyses the reaction D-mannitol 1-phosphate + H2O = D-mannitol + phosphate. The enzyme catalyses D-sorbitol 6-phosphate + H2O = D-sorbitol + phosphate. Sugar-phosphate phosphohydrolase that catalyzes the dephosphorylation of D-mannitol 1-phosphate and D-sorbitol 6-phosphate. Also catalyzes the dephosphorylation of 2-deoxyglucose 6-phosphate (2dGlu6P); this is a biologically important activity in vivo since it contributes to the elimination of this toxic compound and plays an important role in the resistance of E.coli to 2-deoxyglucose. This chain is Hexitol phosphatase B, found in Escherichia coli O157:H7.